A 214-amino-acid polypeptide reads, in one-letter code: Adenylate kinase (214 aa).

10-15 (GAGKGT) lines the ATP pocket. Residues 30–59 (STGDMLRSAVKAGTELGLKAKALMDHGKLV) form an NMP region. AMP is bound by residues T31, R36, 57–59 (KLV), 85–88 (GFPR), and Q92. Positions 122-159 (GRRIHAPSGRVYHIKFNPPVVENKDDVTGEELTVRKDD) are LID. Residues R123 and 132–133 (VY) each bind ATP. The AMP site is built by R156 and R167. R200 lines the ATP pocket.

This sequence belongs to the adenylate kinase family. Monomer.

The protein localises to the cytoplasm. It carries out the reaction AMP + ATP = 2 ADP. The protein operates within purine metabolism; AMP biosynthesis via salvage pathway; AMP from ADP: step 1/1. Its function is as follows. Catalyzes the reversible transfer of the terminal phosphate group between ATP and AMP. Plays an important role in cellular energy homeostasis and in adenine nucleotide metabolism. This Photorhabdus laumondii subsp. laumondii (strain DSM 15139 / CIP 105565 / TT01) (Photorhabdus luminescens subsp. laumondii) protein is Adenylate kinase.